The chain runs to 328 residues: Beta-ketoacyl-[acyl-carrier-protein] synthase III (328 aa).

Active-site residues include C113 and H252. Positions 253 to 257 (QANLR) are ACP-binding. The active site involves N282.

Belongs to the thiolase-like superfamily. FabH family. Homodimer.

Its subcellular location is the cytoplasm. It carries out the reaction malonyl-[ACP] + acetyl-CoA + H(+) = 3-oxobutanoyl-[ACP] + CO2 + CoA. Its pathway is lipid metabolism; fatty acid biosynthesis. In terms of biological role, catalyzes the condensation reaction of fatty acid synthesis by the addition to an acyl acceptor of two carbons from malonyl-ACP. Catalyzes the first condensation reaction which initiates fatty acid synthesis and may therefore play a role in governing the total rate of fatty acid production. Possesses both acetoacetyl-ACP synthase and acetyl transacylase activities. Its substrate specificity determines the biosynthesis of branched-chain and/or straight-chain of fatty acids. The sequence is that of Beta-ketoacyl-[acyl-carrier-protein] synthase III from Campylobacter fetus subsp. fetus (strain 82-40).